Here is a 321-residue protein sequence, read N- to C-terminus: MTLKKIIPNLQKTQNNNNNSISSPLLPHTVQEYFPVIIIVGMSGAGKSTALHVFEDLQLVTADGIPPSLVTSMIHTVQSSSLEHVQGLALGINQHRIHTMQELEHTFQEMRSQHIYFTLLYLEADMPTLIKRYAATRRPHPLEQYHIGLEHALEEEAKRLIPIRQTADIVLDTTTYSIHDLRRFLQKSWNPYPEKIRSIKINIISFGFKYGVPNEADLLFDLRFLPNPYFVEELRPLSGMDKKVATYVLNSASGIKFKKHLIRFLSFLLPLYDAEGRYRITIALGCTGGKHRSVAISELLLHELTKKNYTVSIEHRHMELG.

ATP is bound at residue 41-48 (GMSGAGKS).

It belongs to the RapZ-like family.

Its function is as follows. Displays ATPase and GTPase activities. This chain is Nucleotide-binding protein LI0459, found in Lawsonia intracellularis (strain PHE/MN1-00).